Reading from the N-terminus, the 560-residue chain is E3 SUMO-protein ligase CBX4 (560 aa).

The involved in interaction with H3C15 and H3C1 stretch occupies residues 1 to 75; the sequence is MELPAVGEHV…LMGYRKRGPK (75 aa). The segment at 1–539 is interaction with BMI1; sequence MELPAVGEHV…LSEFKPFFGN (539 aa). The region spanning 11–69 is the Chromo domain; that stretch reads FAVESIEKKRIRKGRVEYLVKWRGWSPKYNTWEPEENILDPRLLIAFQNRERQEQLMGY. Glycyl lysine isopeptide (Lys-Gly) (interchain with G-Cter in SUMO2) cross-links involve residues Lys-77, Lys-106, Lys-114, and Lys-125. A disordered region spans residues 92–152; the sequence is VLTGLQDSST…PPGKSGKYYY (61 aa). Lys-149 is subject to N6-acetyllysine; alternate. A Glycyl lysine isopeptide (Lys-Gly) (interchain with G-Cter in SUMO2); alternate cross-link involves residue Lys-149. Residues Lys-157, Lys-167, and Lys-178 each participate in a glycyl lysine isopeptide (Lys-Gly) (interchain with G-Cter in SUMO2) cross-link. Ser-182 is modified (phosphoserine). Residues Lys-191, Lys-205, Lys-212, Lys-223, Lys-249, Lys-268, Lys-278, and Lys-280 each participate in a glycyl lysine isopeptide (Lys-Gly) (interchain with G-Cter in SUMO2) cross-link. A disordered region spans residues 217 to 243; sequence AAGAPGKGSEKGPPNGMMPAPKEAVTG. Composition is skewed to basic and acidic residues over residues 281 to 291 and 298 to 331; these read SGEVAEGEARS and AADERHPPADRTFKKAAGAEEKKVEAPPKRREEE. The segment at 281–404 is disordered; that stretch reads SGEVAEGEAR…HHHHHHAVGL (124 aa). Glycyl lysine isopeptide (Lys-Gly) (interchain with G-Cter in SUMO2) cross-links involve residues Lys-320, Lys-352, and Lys-365. Positions 380–401 are enriched in basic residues; sequence PSHHPHPHPHHHHHHHHHHHHA. Ser-467 bears the Phosphoserine mark. Lys-494 participates in a covalent cross-link: Glycyl lysine isopeptide (Lys-Gly) (interchain with G-Cter in SUMO2); alternate. Lys-494 participates in a covalent cross-link: Glycyl lysine isopeptide (Lys-Gly) (interchain with G-Cter in SUMO); alternate. Thr-497 carries the post-translational modification Phosphothreonine; by HIPK2. The segment covering 509–521 has biased composition (low complexity); it reads AAPTTTAEKPPAE. The segment at 509 to 528 is disordered; that stretch reads AAPTTTAEKPPAEAQDEPAE. An involved in interaction with H3C15 and RNF2 region spans residues 531–556; the sequence is SEFKPFFGNIIITDVTANCLTVTFKE. Residues 540 to 560 are interaction with RNF2; it reads IIITDVTANCLTVTFKEYVTV.

As to quaternary structure, interacts with histone H3-K9Me3. Interacts with CHTOP. Component of a PRC1-like complex. The composition of the PRC1 complex differs between the PRC1 complex in pluripotent embryonic stem cells containing RNF2, CBX7 and PCGF2, and the PRC1 complex in differentiating cells containing RNF2, CBX2, CBX4 and BMI1. Self-associates. Interacts with SUV39H1 and HIPK2. Interacts with CSNK2B. May interact with H3C15, H3C1 and RNF2. Interacts with SUMO1P1/SUMO5. Interacts with PRDM1/Blimp-1. Post-translationally, ubiquitinated. Ubiquitination regulates the function of the Polycomb group (PcG) multiprotein PRC1-like complex. Deubiquitinated by USP26. Phosphorylated on Thr-497 by HIPK2 upon DNA damage. This phosphorylation stimulates E3 SUMO-protein ligase activity and promotes sumoylation on Lys-494, as well as sumoylation of other target proteins, such as HNRNPK. As to expression, ubiquitous.

The protein resides in the nucleus. The protein localises to the nucleus speckle. Its pathway is protein modification; protein sumoylation. In terms of biological role, E3 SUMO-protein ligase that catalyzes sumoylation of target proteins by promoting the transfer of SUMO from the E2 enzyme to the substrate. Involved in the sumoylation of HNRNPK, a p53/TP53 transcriptional coactivator, hence indirectly regulates p53/TP53 transcriptional activation resulting in p21/CDKN1A expression. Monosumoylates ZNF131. Its function is as follows. Component of a Polycomb group (PcG) multiprotein PRC1-like complex, a complex class required to maintain the transcriptionally repressive state of many genes, including Hox genes, throughout development. PcG PRC1 complex acts via chromatin remodeling and modification of histones; it mediates monoubiquitination of histone H2A 'Lys-119', rendering chromatin heritably changed in its expressibility. Binds to histone H3 trimethylated at 'Lys-9' (H3K9me3). Plays a role in the lineage differentiation of the germ layers in embryonic development. The polypeptide is E3 SUMO-protein ligase CBX4 (CBX4) (Homo sapiens (Human)).